Consider the following 31-residue polypeptide: Cytochrome b6-f complex subunit 6 (31 aa).

A helical transmembrane segment spans residues 4–24 (ITSYFGFLLAALTITSALFIG).

This sequence belongs to the PetL family. In terms of assembly, the 4 large subunits of the cytochrome b6-f complex are cytochrome b6, subunit IV (17 kDa polypeptide, PetD), cytochrome f and the Rieske protein, while the 4 small subunits are PetG, PetL, PetM and PetN. The complex functions as a dimer.

The protein localises to the plastid. The protein resides in the chloroplast thylakoid membrane. Component of the cytochrome b6-f complex, which mediates electron transfer between photosystem II (PSII) and photosystem I (PSI), cyclic electron flow around PSI, and state transitions. PetL is important for photoautotrophic growth as well as for electron transfer efficiency and stability of the cytochrome b6-f complex. The sequence is that of Cytochrome b6-f complex subunit 6 from Hamamelis virginiana (Witch-hazel).